The sequence spans 323 residues: DNA repair and recombination protein RadA (323 aa).

ATP is bound at residue 114–121 (GEFGSGKT).

Belongs to the eukaryotic RecA-like protein family.

Involved in DNA repair and in homologous recombination. Binds and assemble on single-stranded DNA to form a nucleoprotein filament. Hydrolyzes ATP in a ssDNA-dependent manner and promotes DNA strand exchange between homologous DNA molecules. The sequence is that of DNA repair and recombination protein RadA from Picrophilus torridus (strain ATCC 700027 / DSM 9790 / JCM 10055 / NBRC 100828 / KAW 2/3).